Consider the following 525-residue polypeptide: ATP synthase subunit alpha (525 aa).

Residue 169–176 (GDRQTGKT) coordinates ATP.

Belongs to the ATPase alpha/beta chains family. As to quaternary structure, F-type ATPases have 2 components, CF(1) - the catalytic core - and CF(0) - the membrane proton channel. CF(1) has five subunits: alpha(3), beta(3), gamma(1), delta(1), epsilon(1). CF(0) has three main subunits: a(1), b(2) and c(9-12). The alpha and beta chains form an alternating ring which encloses part of the gamma chain. CF(1) is attached to CF(0) by a central stalk formed by the gamma and epsilon chains, while a peripheral stalk is formed by the delta and b chains.

It localises to the cell membrane. The enzyme catalyses ATP + H2O + 4 H(+)(in) = ADP + phosphate + 5 H(+)(out). Functionally, produces ATP from ADP in the presence of a proton gradient across the membrane. The alpha chain is a regulatory subunit. This chain is ATP synthase subunit alpha, found in Mycoplasma capricolum subsp. capricolum (strain California kid / ATCC 27343 / NCTC 10154).